The following is a 949-amino-acid chain: Protocadherin alpha-11 (949 aa).

The signal sequence occupies residues 1 to 29; sequence MFGFQRRGLGTPRLQLWLLLLEFWEVGSG. Cadherin domains follow at residues 30–133, 157–242, 243–349, 350–454, 455–564, and 580–677; these read QLHY…PPVF, ASDA…DPEF, DKSE…SPEV, AVTS…APAF, AQPE…APAL, and VPRS…APKA. Residues 30-696 are Extracellular-facing; sequence QLHYSVSEEA…SPEAALVDVN (667 aa). N-linked (GlcNAc...) asparagine glycosylation is found at Asn265 and Asn304. N-linked (GlcNAc...) asparagine glycosylation occurs at Asn547. Residues 697–717 form a helical membrane-spanning segment; the sequence is VYLIIAICVVSSLLVLTLLLY. Over 718–949 the chain is Cytoplasmic; the sequence is TALWWSATPT…GNSTTDNSDQ (232 aa). PXXP repeat units follow at residues 733-736 and 773-776; these read PGKP and PSLP. Positions 733–893 are 6 X 4 AA repeats of P-X-X-P; sequence PGKPTLVCSR…PDKFIIPGSP (161 aa). Disordered regions lie at residues 753–807 and 826–949; these read RRQR…DWRY and ILRA…NSDQ. Positions 780-789 are enriched in basic and acidic residues; it reads NKEEEGERQE. 4 PXXP repeats span residues 795–798, 831–834, 872–875, and 890–893; these read PGQP, PGGP, PGNP, and PGSP. A compositionally biased stretch (basic and acidic residues) spans 908–922; it reads DKSDFITFGKKEETK.

Its subcellular location is the cell membrane. Potential calcium-dependent cell-adhesion protein. May be involved in the establishment and maintenance of specific neuronal connections in the brain. The sequence is that of Protocadherin alpha-11 (PCDHA11) from Homo sapiens (Human).